A 486-amino-acid chain; its full sequence is Bifunctional protein HldE (486 aa).

Positions 1–329 (MSSRLSGLLD…AALSVAGPVG (329 aa)) are ribokinase. Residue 204-207 (NAFE) coordinates ATP. The active site involves Asp274. Residues 355–486 (FTNGCFDILH…AIIARSETGK (132 aa)) form a cytidylyltransferase region.

This sequence in the N-terminal section; belongs to the carbohydrate kinase PfkB family. It in the C-terminal section; belongs to the cytidylyltransferase family. Homodimer.

It carries out the reaction D-glycero-beta-D-manno-heptose 7-phosphate + ATP = D-glycero-beta-D-manno-heptose 1,7-bisphosphate + ADP + H(+). The enzyme catalyses D-glycero-beta-D-manno-heptose 1-phosphate + ATP + H(+) = ADP-D-glycero-beta-D-manno-heptose + diphosphate. It participates in nucleotide-sugar biosynthesis; ADP-L-glycero-beta-D-manno-heptose biosynthesis; ADP-L-glycero-beta-D-manno-heptose from D-glycero-beta-D-manno-heptose 7-phosphate: step 1/4. Its pathway is nucleotide-sugar biosynthesis; ADP-L-glycero-beta-D-manno-heptose biosynthesis; ADP-L-glycero-beta-D-manno-heptose from D-glycero-beta-D-manno-heptose 7-phosphate: step 3/4. Functionally, catalyzes the phosphorylation of D-glycero-D-manno-heptose 7-phosphate at the C-1 position to selectively form D-glycero-beta-D-manno-heptose-1,7-bisphosphate. Catalyzes the ADP transfer from ATP to D-glycero-beta-D-manno-heptose 1-phosphate, yielding ADP-D-glycero-beta-D-manno-heptose. In Hyphomonas neptunium (strain ATCC 15444), this protein is Bifunctional protein HldE.